Reading from the N-terminus, the 180-residue chain is Alkyl hydroperoxide reductase AhpD (180 aa).

Cysteine 131 acts as the Proton donor in catalysis. Cysteine 131 and cysteine 134 are joined by a disulfide. Catalysis depends on cysteine 134, which acts as the Cysteine sulfenic acid (-SOH) intermediate.

It belongs to the AhpD family.

The catalysed reaction is N(6)-[(R)-dihydrolipoyl]-L-lysyl-[lipoyl-carrier protein] + a hydroperoxide = N(6)-[(R)-lipoyl]-L-lysyl-[lipoyl-carrier protein] + an alcohol + H2O. Its function is as follows. Antioxidant protein with alkyl hydroperoxidase activity. Required for the reduction of the AhpC active site cysteine residues and for the regeneration of the AhpC enzyme activity. The sequence is that of Alkyl hydroperoxide reductase AhpD from Hyphomonas neptunium (strain ATCC 15444).